A 158-amino-acid chain; its full sequence is Inner membrane assembly complex subunit 17 (158 aa).

A mitochondrion-targeting transit peptide spans 1 to 15; sequence MFRPLVKRVVTRRFL. The Mitochondrial matrix portion of the chain corresponds to 16–85; sequence AAANNSNAHI…KTQETSLKKF (70 aa). A helical membrane pass occupies residues 86-108; the sequence is VRPAWIFLLMGSIVYLSCHYVWW. Topologically, residues 109–158 are mitochondrial intermembrane; it reads KLDYEEKELEYTHKVHQLESELAALNEAHNSSVSSDKNSKRSSRKWYKFW. A coiled-coil region spans residues 110–140; sequence LDYEEKELEYTHKVHQLESELAALNEAHNSS.

It belongs to the INA17 family. As to quaternary structure, component of the inner membrane assembly (INA) complex, composed of INA17 and INA22. Interacts with a subset of F(1)F(0)-ATP synthase subunits of the F(1)-domain and the peripheral stalk.

It is found in the mitochondrion inner membrane. Functionally, component of the INA complex (INAC) that promotes the biogenesis of mitochondrial F(1)F(0)-ATP synthase. INAC facilitates the assembly of the peripheral stalk and promotes the assembly of the catalytic F(1)-domain with the membrane-embedded F(0)-domain. This Kluyveromyces lactis (strain ATCC 8585 / CBS 2359 / DSM 70799 / NBRC 1267 / NRRL Y-1140 / WM37) (Yeast) protein is Inner membrane assembly complex subunit 17.